Consider the following 286-residue polypeptide: Polyamine aminopropyltransferase (286 aa).

The PABS domain occupies 5-238; the sequence is TMWHETLHDQ…GIMTFAWATD (234 aa). Glutamine 33 provides a ligand contact to S-methyl-5'-thioadenosine. Spermidine-binding residues include histidine 64 and aspartate 88. S-methyl-5'-thioadenosine is bound by residues glutamate 108 and 140-141; that span reads DG. Aspartate 158 (proton acceptor) is an active-site residue. 158–161 is a binding site for spermidine; sequence DCTD. Proline 165 serves as a coordination point for S-methyl-5'-thioadenosine.

The protein belongs to the spermidine/spermine synthase family. As to quaternary structure, homodimer or homotetramer.

The protein localises to the cytoplasm. The catalysed reaction is S-adenosyl 3-(methylsulfanyl)propylamine + putrescine = S-methyl-5'-thioadenosine + spermidine + H(+). It functions in the pathway amine and polyamine biosynthesis; spermidine biosynthesis; spermidine from putrescine: step 1/1. Its function is as follows. Catalyzes the irreversible transfer of a propylamine group from the amino donor S-adenosylmethioninamine (decarboxy-AdoMet) to putrescine (1,4-diaminobutane) to yield spermidine. In Salmonella paratyphi A (strain ATCC 9150 / SARB42), this protein is Polyamine aminopropyltransferase.